We begin with the raw amino-acid sequence, 173 residues long: Small ribosomal subunit protein uS5 (173 aa).

The S5 DRBM domain occupies 16–79 (LSELLVSVRR…NAAKKNMIRV (64 aa)).

This sequence belongs to the universal ribosomal protein uS5 family. As to quaternary structure, part of the 30S ribosomal subunit. Contacts proteins S4 and S8.

Functionally, with S4 and S12 plays an important role in translational accuracy. In terms of biological role, located at the back of the 30S subunit body where it stabilizes the conformation of the head with respect to the body. The protein is Small ribosomal subunit protein uS5 of Anaplasma phagocytophilum (strain HZ).